A 240-amino-acid chain; its full sequence is UDP-2,3-diacylglucosamine hydrolase (240 aa).

5 residues coordinate Mn(2+): D8, H10, D41, N78, and H113. Substrate is bound at residue 78 to 79; that stretch reads NR. Residues D121, S159, N163, K166, and H194 each coordinate substrate. H194 and H196 together coordinate Mn(2+).

The protein belongs to the LpxH family. Mn(2+) serves as cofactor.

The protein localises to the cell inner membrane. The catalysed reaction is UDP-2-N,3-O-bis[(3R)-3-hydroxytetradecanoyl]-alpha-D-glucosamine + H2O = 2-N,3-O-bis[(3R)-3-hydroxytetradecanoyl]-alpha-D-glucosaminyl 1-phosphate + UMP + 2 H(+). Its pathway is glycolipid biosynthesis; lipid IV(A) biosynthesis; lipid IV(A) from (3R)-3-hydroxytetradecanoyl-[acyl-carrier-protein] and UDP-N-acetyl-alpha-D-glucosamine: step 4/6. In terms of biological role, hydrolyzes the pyrophosphate bond of UDP-2,3-diacylglucosamine to yield 2,3-diacylglucosamine 1-phosphate (lipid X) and UMP by catalyzing the attack of water at the alpha-P atom. Involved in the biosynthesis of lipid A, a phosphorylated glycolipid that anchors the lipopolysaccharide to the outer membrane of the cell. This is UDP-2,3-diacylglucosamine hydrolase from Shewanella baltica (strain OS185).